A 661-amino-acid polypeptide reads, in one-letter code: Phospholipid:diacylglycerol acyltransferase (661 aa).

The interval Met-1–Arg-71 is disordered. Topologically, residues Met-1–Leu-80 are cytoplasmic. Residues His-34–Gly-48 show a composition bias toward basic residues. 2 consecutive short sequence motifs (bipartite nuclear localization signal) follow at residues His-43–Ser-50 and Arg-64–Arg-71. The span at Lys-54–Gly-70 shows a compositional bias: basic and acidic residues. Residues Ile-81 to Val-101 form a helical membrane-spanning segment. Topologically, residues His-102–Met-661 are lumenal. Gln-162 provides a ligand contact to substrate. Residues Gly-322–Gly-326 carry the GHSXG lipase motif motif. Ser-324 serves as the catalytic Acyl-ester intermediate. Position 325 (Met-325) interacts with substrate. N-linked (GlcNAc...) asparagine glycosylation is found at Asn-453, Asn-461, and Asn-469. Asp-567 (charge relay system) is an active-site residue. N-linked (GlcNAc...) asparagine glycosylation is present at Asn-594. Catalysis depends on His-618, which acts as the Charge relay system.

Belongs to the AB hydrolase superfamily. Lipase family.

The protein resides in the endoplasmic reticulum membrane. The protein localises to the nucleus inner membrane. The enzyme catalyses a glycerophospholipid + a 1,2-diacyl-sn-glycerol = a monoacylglycerophospholipid + a triacyl-sn-glycerol. It carries out the reaction a 1-acyl-sn-glycerol + a 1,2-diacyl-sn-glycero-3-phosphocholine = a 1-acyl-sn-glycero-3-phosphocholine + a 1,2-diacyl-sn-glycerol. The catalysed reaction is 1,2-di-(9Z-octadecenoyl)-sn-glycero-3-phosphoethanolamine + 1,2-di-(9Z-octadecenoyl)-sn-glycerol = 1-(9Z-octadecenoyl)-sn-glycero-3-phosphoethanolamine + 1,2,3-tri-(9Z-octadecenoyl)-glycerol. It catalyses the reaction 1,2-di-(9Z-octadecenoyl)-sn-glycerol + 1,2-di-(9Z-octadecenoyl)-sn-glycero-3-phosphocholine = 1,2,3-tri-(9Z-octadecenoyl)-glycerol + 1-(9Z-octadecenoyl)-sn-glycero-3-phosphocholine. The enzyme catalyses 1-(9Z-octadecenoyl)-sn-glycerol + 1,2-di-(9Z-octadecenoyl)-sn-glycero-3-phosphocholine = di-(9Z)-octadecenoylglycerol + 1-(9Z-octadecenoyl)-sn-glycero-3-phosphocholine. It carries out the reaction 2-(9Z-octadecenoyl)-glycerol + 1,2-di-(9Z-octadecenoyl)-sn-glycero-3-phosphocholine = 1,2-di-(9Z-octadecenoyl)-glycerol + 1-(9Z-octadecenoyl)-sn-glycero-3-phosphocholine. The catalysed reaction is 1-(9Z-octadecenoyl)-2-hexadecanoyl-sn-glycero-3-phosphoethanolamine + 1,2-di-(9Z-octadecenoyl)-sn-glycerol = 1,2-di-(9Z)-octadecenoyl-3-hexadecanoyl-sn-glycerol + 1-(9Z-octadecenoyl)-sn-glycero-3-phosphoethanolamine. It catalyses the reaction 1-(9Z-octadecenoyl)-2-octadecanoyl-sn-glycero-3-phosphoethanolamine + 1,2-di-(9Z-octadecenoyl)-sn-glycerol = 1,2-di-(9Z)-octadecenoyl-3-octadecanoyl-sn-glycerol + 1-(9Z-octadecenoyl)-sn-glycero-3-phosphoethanolamine. The enzyme catalyses 1-(9Z)-octadecenoyl-2-(9Z,12Z)-octadecadienoyl-sn-glycero-3-phosphoethanolamine + 1,2-di-(9Z-octadecenoyl)-sn-glycerol = 1,2-di-(9Z)-octadecenoyl-3-(9Z,12Z)-octadecadienoyl-sn-glycerol + 1-(9Z-octadecenoyl)-sn-glycero-3-phosphoethanolamine. Catalyzes triacylglycerol (TAG) formation by an acyl-CoA independent pathway. The enzyme specifically transfers acyl groups from the sn-2 position of a phospholipid to diacylglycerol (DAG), thus forming an sn-1-lysophospholipid. The preferred acyl donors are phosphatidylethanolamine (PE) and phosphatidylcholine (PC). Also capable of using broad acyl donors such as phosphatidic acid (PA), phosphatidylserine (PS), phosphatidylglycerol (PG) and phosphatidylinositol (PI), as well as monogalactosyldiacylglycerol (MGDG), digalactosyldiacylglycerol (DGDG), and acyl-CoA, and it is more likely to use unsaturated acyl donors. As acyl acceptors, it prefers 1,2- over 1,3-diacylglycerol (DAG). Additionally, has esterification activity that can utilize methanol as acyl acceptor to generate fatty acid methyl esters (FAME). Can also utilize ceramide instead of DAG, acylating the ceramides by attaching a fatty acid to the hydroxy group on the first carbon atom of the long-chain base to produce 1-O-acylceramides. Involved in lipid particle synthesis from the endoplasmic reticulum, promoting localized TAG production at discrete ER subdomains. Relocates from the endoplasmic reticulum to a subdomain of the inner nuclear membrane upon nutrient starvation, where it provides a site of TAG synthesis, which is coupled with nuclear membrane remodeling. The sequence is that of Phospholipid:diacylglycerol acyltransferase from Saccharomyces cerevisiae (strain ATCC 204508 / S288c) (Baker's yeast).